Consider the following 316-residue polypeptide: Acetyl-coenzyme A carboxylase carboxyl transferase subunit beta (316 aa).

The region spanning L29 to H298 is the CoA carboxyltransferase N-terminal domain. C33, C36, C52, and C55 together coordinate Zn(2+). The segment at C33–C55 adopts a C4-type zinc-finger fold.

The protein belongs to the AccD/PCCB family. Acetyl-CoA carboxylase is a heterohexamer composed of biotin carboxyl carrier protein (AccB), biotin carboxylase (AccC) and two subunits each of ACCase subunit alpha (AccA) and ACCase subunit beta (AccD). The cofactor is Zn(2+).

It localises to the cytoplasm. It catalyses the reaction N(6)-carboxybiotinyl-L-lysyl-[protein] + acetyl-CoA = N(6)-biotinyl-L-lysyl-[protein] + malonyl-CoA. The protein operates within lipid metabolism; malonyl-CoA biosynthesis; malonyl-CoA from acetyl-CoA: step 1/1. In terms of biological role, component of the acetyl coenzyme A carboxylase (ACC) complex. Biotin carboxylase (BC) catalyzes the carboxylation of biotin on its carrier protein (BCCP) and then the CO(2) group is transferred by the transcarboxylase to acetyl-CoA to form malonyl-CoA. The protein is Acetyl-coenzyme A carboxylase carboxyl transferase subunit beta of Microcystis aeruginosa (strain NIES-843 / IAM M-2473).